The sequence spans 115 residues: Protein translation factor SUI1 homolog (115 aa).

The protein belongs to the SUI1 family.

Functionally, probably involved in translation. This Sporobolus stapfianus (Ressurection grass) protein is Protein translation factor SUI1 homolog.